The chain runs to 41 residues: Large ribosomal subunit protein bL36 (41 aa).

Belongs to the bacterial ribosomal protein bL36 family.

The sequence is that of Large ribosomal subunit protein bL36 from Bartonella bacilliformis (strain ATCC 35685 / KC583 / Herrer 020/F12,63).